A 172-amino-acid polypeptide reads, in one-letter code: RNA silencing suppressor p19 (172 aa).

Over residues 1-15 (MERAIQGNDAREQAY) the composition is skewed to basic and acidic residues. A disordered region spans residues 1–38 (MERAIQGNDAREQAYGERWNGGPGGSTSPFQLPDESPS).

This sequence belongs to the tombusvirus protein p19 family. Homodimer.

Viral suppressor of RNA silencing which binds specifically to silencing RNAs (siRNAs). Acts as a molecular caliper to specifically select siRNAs based on the length of the duplex region of the RNA. The protein is RNA silencing suppressor p19 of Tomato bushy stunt virus (strain A23) (TBSV).